A 431-amino-acid polypeptide reads, in one-letter code: Xaa-Arg dipeptidase (431 aa).

The protein belongs to the peptidase M20A family.

The enzyme catalyses beta-alanyl-L-lysine + H2O = beta-alanine + L-lysine. It carries out the reaction beta-alanyl-L-arginine + H2O = beta-alanine + L-arginine. The catalysed reaction is beta-alanyl-L-ornithine + H2O = beta-alanine + L-ornithine. It catalyses the reaction N(2)-(4-aminobutanoyl)-L-lysine + H2O = 4-aminobutanoate + L-lysine. The enzyme catalyses N(2)-(4-aminobutanoyl)-L-arginine + H2O = 4-aminobutanoate + L-arginine. It carries out the reaction N(2)-(4-aminobutanoyl)-L-ornithine + H2O = 4-aminobutanoate + L-ornithine. In terms of biological role, catalyzes the peptide bond hydrolysis in dipeptides having basic amino acids lysine, ornithine or arginine at C-terminus. Postulated to function in a metabolite repair mechanism by eliminating alternate dipeptide by-products formed during carnosine synthesis. The polypeptide is Xaa-Arg dipeptidase (Mus musculus (Mouse)).